A 332-amino-acid polypeptide reads, in one-letter code: tRNA U34 carboxymethyltransferase (332 aa).

Carboxy-S-adenosyl-L-methionine-binding positions include K96, W110, K115, G135, 186–187 (LE), M204, Y208, and R323.

This sequence belongs to the class I-like SAM-binding methyltransferase superfamily. CmoB family. Homotetramer.

The enzyme catalyses carboxy-S-adenosyl-L-methionine + 5-hydroxyuridine(34) in tRNA = 5-carboxymethoxyuridine(34) in tRNA + S-adenosyl-L-homocysteine + H(+). In terms of biological role, catalyzes carboxymethyl transfer from carboxy-S-adenosyl-L-methionine (Cx-SAM) to 5-hydroxyuridine (ho5U) to form 5-carboxymethoxyuridine (cmo5U) at position 34 in tRNAs. The sequence is that of tRNA U34 carboxymethyltransferase from Hydrogenovibrio crunogenus (strain DSM 25203 / XCL-2) (Thiomicrospira crunogena).